The chain runs to 732 residues: uncharacterized protein (732 aa).

This sequence belongs to the mimivirus L137 family.

This is an uncharacterized protein from Acanthamoeba polyphaga mimivirus (APMV).